Consider the following 588-residue polypeptide: Calcium/calmodulin-dependent protein kinase kinase 2 (588 aa).

The segment covering 1 to 11 (MSSCVSSQPTS) has biased composition (polar residues). Disordered stretches follow at residues 1–34 (MSSC…KPCE) and 64–147 (DLNL…PTVE). At Ser-2 the chain carries N-acetylserine. Ser-99, Ser-114, Ser-129, Ser-133, and Ser-137 each carry phosphoserine. The span at 101 to 116 (QEPSQGGPASSSNSLD) shows a compositional bias: polar residues. Residues 124-139 (PSLSYSPASSPQSSPR) are compositionally biased toward low complexity. The Protein kinase domain maps to 165 to 446 (YTLKDEIGKG…VPEIKLHPWV (282 aa)). ATP-binding positions include 171 to 179 (IGKGSYGVV) and Lys-194. Positions 204–226 (QAGFPRRPPPRGARPAPGGCIQP) are RP domain. Positions 205–225 (AGFPRRPPPRGARPAPGGCIQ) are disordered. The Proton acceptor role is filled by Asp-312. The segment at 472 to 477 (ENSVKH) is autoinhibitory domain. The calmodulin-binding stretch occupies residues 475-500 (VKHIPSLATVILVKTMIRKRSFGNPF). Ser-495, Ser-511, Thr-522, and Ser-572 each carry phosphoserine. Residues 497–588 (GNPFEGSRRE…LQPEEVMEPE (92 aa)) form a disordered region. Basic and acidic residues predominate over residues 521-536 (PTREWEPLSEPKEARQ). The span at 570–580 (PGSPPRMPPLQ) shows a compositional bias: pro residues.

This sequence belongs to the protein kinase superfamily. Ser/Thr protein kinase family. In terms of assembly, interacts with calmodulin. Post-translationally, autophosphorylated and phosphorylated by PKA. Each isoform may show a different pattern of phosphorylation. Expressed in all tissues tested. A differential expression pattern compared to CAMKK1 is observed in the brain.

Its subcellular location is the nucleus. The protein resides in the cytoplasm. It localises to the cell projection. It is found in the neuron projection. It carries out the reaction L-seryl-[protein] + ATP = O-phospho-L-seryl-[protein] + ADP + H(+). The enzyme catalyses L-threonyl-[protein] + ATP = O-phospho-L-threonyl-[protein] + ADP + H(+). With respect to regulation, activated by Ca(2+)/calmodulin. Binding of calmodulin may relieve intrasteric autoinhibition. Autophosphorylation does not alter activity or regulation by Ca(2+)/calmodulin. In part, activity is independent on Ca(2+)/calmodulin. In terms of biological role, calcium/calmodulin-dependent protein kinase belonging to a proposed calcium-triggered signaling cascade involved in a number of cellular processes. Phosphorylates CAMK1, CAMK4 and CAMK1D. Efficiently phosphorylates 5'-AMP-activated protein kinase (AMPK) trimer, including that consisting of PRKAA1, PRKAB1 and PRKAG1. This phosphorylation is stimulated in response to Ca(2+) signals. May play a role in neurite growth. Isoform 2 may promote neurite elongation, while isoform 1 may promoter neurite branching. May be involved in hippocampal activation of CREB1. The protein is Calcium/calmodulin-dependent protein kinase kinase 2 (Camkk2) of Mus musculus (Mouse).